Reading from the N-terminus, the 132-residue chain is Fatty acid-binding protein 2 (132 aa).

S2 carries the N-acetylserine modification. Residues Q40 and 128 to 130 (RYY) contribute to the hexadecanoate site.

It belongs to the calycin superfamily. Fatty-acid binding protein (FABP) family. As to quaternary structure, monomer. Midgut.

It is found in the cytoplasm. Functionally, binds fatty acids in a 1:1 molar ratio. The protein is Fatty acid-binding protein 2 (MFB2) of Manduca sexta (Tobacco hawkmoth).